The chain runs to 211 residues: Troponin I, cardiac muscle (211 aa).

Residues 1–23 form a disordered region; the sequence is MADESGDAAGCPPPAPAPIRRQS. The residue at position 2 (A2) is an N-acetylalanine. S5 is subject to Phosphoserine. A phosphoserine; by PKA and PKD/PRKD1 mark is found at S23 and S24. Phosphotyrosine is present on Y27. T32 carries the post-translational modification Phosphothreonine; by STK4/MST1. The involved in binding TNC stretch occupies residues 33–80; the sequence is EPHAKKKSKISASRKLQLKTLMLQIAKQELEREAEERRGEKGRALSTR. Phosphoserine; by PKC/PRKCE occurs at positions 43 and 45. T52 bears the Phosphothreonine; by STK4/MST1 mark. At S78 the chain carries Phosphoserine. Position 79 is a phosphothreonine (T79). T130 and T144 each carry phosphothreonine; by STK4/MST1. Positions 130-150 are involved in binding TNC and actin; the sequence is TQKIFDLRGKFKRPTLRRVRI. S151 is modified (phosphoserine; by PAK3). Phosphoserine is present on S167. Phosphothreonine is present on T182. At S200 the chain carries Phosphoserine.

This sequence belongs to the troponin I family. As to quaternary structure, binds to actin and tropomyosin. Interacts with TRIM63. Interacts with STK4/MST1. Phosphorylated at Ser-23 and Ser-24 by PRKD1; phosphorylation reduces myofilament calcium sensitivity. Phosphorylated preferentially at Thr-32. Phosphorylation by STK4/MST1 alters its binding affinity to TNNC1 (cardiac Tn-C) and TNNT2 (cardiac Tn-T). Phosphorylated at Ser-43 and Ser-45 by PRKCE; phosphorylation increases myocardium contractile dysfunction.

Functionally, troponin I is the inhibitory subunit of troponin, the thin filament regulatory complex which confers calcium-sensitivity to striated muscle actomyosin ATPase activity. The sequence is that of Troponin I, cardiac muscle (TNNI3) from Canis lupus familiaris (Dog).